Here is a 151-residue protein sequence, read N- to C-terminus: Copper transporter 2 (151 aa).

The next 2 helical transmembrane spans lie at 42-62 and 97-117; these read GARGGMYALAILFMFALAVLL and VAYLIMLALMSFNGGVFLAIV.

Belongs to the copper transporter (Ctr) (TC 1.A.56) family. SLC31A subfamily. In terms of assembly, self-interacts. Interacts with SWEET11 and COPT1.

The protein localises to the cell membrane. Its function is as follows. Involved in the transport of copper, in cooperation with SWEET11 and COPT1. Contributes to the removal of copper (Cu) from xylem, and thus to the sensitivity toward bacterial pathogens such as X.oryzae pv. oryzae (Xoo). The sequence is that of Copper transporter 2 (COPT2) from Oryza sativa subsp. japonica (Rice).